The primary structure comprises 103 residues: Large ribosomal subunit protein uL24 (103 aa).

The protein belongs to the universal ribosomal protein uL24 family. In terms of assembly, part of the 50S ribosomal subunit.

In terms of biological role, one of two assembly initiator proteins, it binds directly to the 5'-end of the 23S rRNA, where it nucleates assembly of the 50S subunit. One of the proteins that surrounds the polypeptide exit tunnel on the outside of the subunit. In Bacillus anthracis (strain A0248), this protein is Large ribosomal subunit protein uL24.